The following is a 354-amino-acid chain: Ion-translocating oxidoreductase complex subunit D (354 aa).

5 consecutive transmembrane segments (helical) span residues 19–39, 40–60, 70–89, 94–116, and 123–143; these read IMLW…YYFG, FGVL…EFLV, FYIS…VAIP, YWII…GGLG, and AMVG…TWLA. Position 186 is an FMN phosphoryl threonine (Thr186). A run of 5 helical transmembrane segments spans residues 215–235, 242–262, 266–286, 300–320, and 321–341; these read LAGL…LFLV, WQIP…SWLF, MPSP…FFIA, LVFG…GGYP, and DGAA…DQYT.

This sequence belongs to the NqrB/RnfD family. In terms of assembly, the complex is composed of six subunits: RnfA, RnfB, RnfC, RnfD, RnfE and RnfG. FMN is required as a cofactor.

Its subcellular location is the cell inner membrane. Part of a membrane-bound complex that couples electron transfer with translocation of ions across the membrane. This Mannheimia succiniciproducens (strain KCTC 0769BP / MBEL55E) protein is Ion-translocating oxidoreductase complex subunit D.